The following is a 309-amino-acid chain: Taste receptor type 2 member 31 (309 aa).

Over 1–2 (MT) the chain is Extracellular. Residues 3-23 (TFLPIIFSSLVVVIFVIGNFA) traverse the membrane as a helical segment. Residues 24–55 (NGFIALVNSIEWFKXQKISFADQILTALAVSR) lie on the Cytoplasmic side of the membrane. A helical transmembrane segment spans residues 56-76 (VGLLWVLLLNWYSTVLNPAFY). Residues 77 to 100 (SVEVRTTAYNVWAVTGHFSNWLAT) are Extracellular-facing. The chain crosses the membrane as a helical span at residues 101 to 121 (SLSIFYLLKIANFSNFIFLHL). Over 122 to 126 (KRRVK) the chain is Cytoplasmic. A helical membrane pass occupies residues 127 to 147 (SVILVMLLGPLLFLACQLFMI). Topologically, residues 148-181 (NMKEIVRTKEYEGNMTWKIKLRSAVYLSDATVTT) are extracellular. Asn-161 carries an N-linked (GlcNAc...) asparagine glycan. A helical membrane pass occupies residues 182 to 202 (LGNLVPFTLTLLCFLLLICSL). At 203-229 (CKHLKKMQLHGKGSQDPSTKVHIKVLQ) the chain is on the cytoplasmic side. Residues 230 to 250 (TVISFLLLCAIYFLSIMISVW) traverse the membrane as a helical segment. At 251-259 (SFGSLKNKP) the chain is on the extracellular side. The helical transmembrane segment at 260-280 (VFMFCKAIRFSYPSIHPFILI) threads the bilayer. The Cytoplasmic segment spans residues 281–309 (WGNKKLKQTFLSVLRQVRYWVKGEKPSSP).

It belongs to the G-protein coupled receptor T2R family.

The protein localises to the membrane. Its function is as follows. Receptor that may play a role in the perception of bitterness and is gustducin-linked. May play a role in sensing the chemical composition of the gastrointestinal content. The activity of this receptor may stimulate alpha gustducin, mediate PLC-beta-2 activation and lead to the gating of TRPM5. This Pan paniscus (Pygmy chimpanzee) protein is Taste receptor type 2 member 31 (TAS2R31).